A 629-amino-acid chain; its full sequence is tRNA uridine 5-carboxymethylaminomethyl modification enzyme MnmG (629 aa).

FAD is bound by residues 13–18 (GGGHAG), Val125, and Ser180. 273–287 (GPRYCPSIEDKVMRF) serves as a coordination point for NAD(+). Position 370 (Gln370) interacts with FAD.

This sequence belongs to the MnmG family. In terms of assembly, homodimer. Heterotetramer of two MnmE and two MnmG subunits. It depends on FAD as a cofactor.

Its subcellular location is the cytoplasm. Its function is as follows. NAD-binding protein involved in the addition of a carboxymethylaminomethyl (cmnm) group at the wobble position (U34) of certain tRNAs, forming tRNA-cmnm(5)s(2)U34. The protein is tRNA uridine 5-carboxymethylaminomethyl modification enzyme MnmG of Klebsiella pneumoniae subsp. pneumoniae (strain ATCC 700721 / MGH 78578).